The following is a 366-amino-acid chain: Anhydro-N-acetylmuramic acid kinase (366 aa).

10 to 17 (GTSMDGID) provides a ligand contact to ATP.

This sequence belongs to the anhydro-N-acetylmuramic acid kinase family.

It catalyses the reaction 1,6-anhydro-N-acetyl-beta-muramate + ATP + H2O = N-acetyl-D-muramate 6-phosphate + ADP + H(+). The protein operates within amino-sugar metabolism; 1,6-anhydro-N-acetylmuramate degradation. It functions in the pathway cell wall biogenesis; peptidoglycan recycling. Catalyzes the specific phosphorylation of 1,6-anhydro-N-acetylmuramic acid (anhMurNAc) with the simultaneous cleavage of the 1,6-anhydro ring, generating MurNAc-6-P. Is required for the utilization of anhMurNAc either imported from the medium or derived from its own cell wall murein, and thus plays a role in cell wall recycling. In Legionella pneumophila (strain Paris), this protein is Anhydro-N-acetylmuramic acid kinase.